The following is a 218-amino-acid chain: Putative glutamine transport system permease protein GlnP (218 aa).

Residues 19–208 (TLITLKYSVI…ILVMLISFIA (190 aa)) enclose the ABC transmembrane type-1 domain. A run of 4 helical transmembrane segments spans residues 25–45 (YSVI…LCKV), 57–79 (FYTS…FASP), 86–108 (FTVF…SEVI), and 187–207 (FFPM…ISFI).

This sequence belongs to the binding-protein-dependent transport system permease family. HisMQ subfamily.

The protein resides in the cell inner membrane. Part of the binding-protein-dependent transport system for glutamine; probably responsible for the translocation of the substrate across the membrane. This chain is Putative glutamine transport system permease protein GlnP (glnP), found in Rickettsia bellii (strain RML369-C).